The chain runs to 329 residues: Vacuolar protein sorting-associated protein 26B-like (329 aa).

Belongs to the VPS26 family.

The protein localises to the cytoplasm. It localises to the membrane. In terms of biological role, probable component of the retromer complex, a complex required to retrieve lysosomal enzyme receptors (IGF2R and M6PR) from endosomes to the trans-Golgi network. The protein is Vacuolar protein sorting-associated protein 26B-like (vps26bl) of Danio rerio (Zebrafish).